A 190-amino-acid chain; its full sequence is MPFLQIFLLSIGVAADAFACSVVRGTAIRVNLFKRALVLAGIFGVFQAAMPLIGWVIGRFFAGITFIAEIDHWIAFALLGVVGAKMIWDAFQPEDDETIVDDGRVQFRPAIILGLATSIDALAVGMGLAFVEVSILKVALSMGLITFALSLVGAWIGHHGGGKFGKWATILGGIILIGIGANIVYEHLSA.

The next 6 helical transmembrane spans lie at 3–23, 37–57, 72–88, 111–131, 138–158, and 164–184; these read FLQIFLLSIGVAADAFACSVV, LVLAGIFGVFQAAMPLIGWVI, HWIAFALLGVVGAKMIW, IILGLATSIDALAVGMGLAFV, VALSMGLITFALSLVGAWIGH, and FGKWATILGGIILIGIGANIV.

Belongs to the MntP (TC 9.B.29) family.

It localises to the cell membrane. Its function is as follows. Probably functions as a manganese efflux pump. This is Putative manganese efflux pump MntP from Corynebacterium glutamicum (strain R).